The primary structure comprises 256 residues: uncharacterized protein (256 aa).

The signal sequence occupies residues 1 to 24; that stretch reads MIKRVNKLVLGISFLFLIISIFAG. Cysteine 25 carries N-palmitoyl cysteine lipidation. A lipid anchor (S-diacylglycerol cysteine) is attached at cysteine 25.

This sequence belongs to the staphylococcal tandem lipoprotein family.

The protein localises to the cell membrane. This is an uncharacterized protein from Staphylococcus aureus (strain Mu50 / ATCC 700699).